Reading from the N-terminus, the 443-residue chain is Citrate transporter CitP (443 aa).

A run of 13 helical transmembrane segments spans residues 27–47, 59–79, 83–103, 114–134, 151–171, 177–197, 209–229, 268–288, 294–314, 322–342, 350–370, 388–410, and 422–442; these read ISGI…IAIS, IFAL…LPIF, LGGG…TNVM, FING…SSLF, VAFI…VIIG, AILY…IVPL, SAGI…LAII, YVQL…GTML, GINA…FGLL, VIMF…AGVG, VLLA…IVAI, AAIT…VLAA, and MGNR…VTFM.

Belongs to the 2-hydroxycarboxylate transporter (2-HCT) (TC 2.A.24) family.

It is found in the cell membrane. The enzyme catalyses (R)-lactate(in) + citrate(out) = (R)-lactate(out) + citrate(in). It carries out the reaction (S)-lactate(in) + citrate(out) = (S)-lactate(out) + citrate(in). It catalyses the reaction citrate(in) + H(+)(in) = citrate(out) + H(+)(out). Its activity is regulated as follows. Uptake of citrate is not affected by the absence or presence of Na(+) up to 25 mM and is increasingly inhibited by increasing Mg(2+) concentrations. Its function is as follows. Secondary transporter involved in citrate metabolism. During cometabolism of citrate and glucose, catalyzes the uptake of divalent citrate into the cell coupled to the exit of monovalent lactate, a product of citrate fermentation during citrate-glucose cometabolism (precursor/product exchange). The citrate/lactate exchange is electrogenic and results in the generation of a membrane potential. In the absence of glucose, i.e. when no lactate is produced, CitP catalyzes the proton-dependent transport of citrate and malate. Transports the divalent form of citrate and malate with the concomitant uptake of one proton, therefore translocating a single unit of negative charge across the membrane. In vitro, transports a range of substrates that contain the 2-hydroxycarboxylate motif, HO-CR(2)-COO(-), with a preference for malate, citrate and monovalent 2-hydroxyisobutyrate. Modification of the OH or the COO(-) groups of the 2-hydroxycarboxylate motif drastically reduces the affinity of the transporter for the substrates, indicating their relevance in substrate recognition. Significant activity is also observed with some 2-oxocarboxylates and a 3-hydroxycarboxylate. The polypeptide is Citrate transporter CitP (Leuconostoc mesenteroides subsp. mesenteroides).